Reading from the N-terminus, the 92-residue chain is Elongation factor 1-beta (92 aa).

The protein belongs to the EF-1-beta/EF-1-delta family.

In terms of biological role, promotes the exchange of GDP for GTP in EF-1-alpha/GDP, thus allowing the regeneration of EF-1-alpha/GTP that could then be used to form the ternary complex EF-1-alpha/GTP/AAtRNA. This Pyrobaculum arsenaticum (strain DSM 13514 / JCM 11321 / PZ6) protein is Elongation factor 1-beta.